A 452-amino-acid chain; its full sequence is tRNA modification GTPase MnmE (452 aa).

Positions 21, 78, and 118 each coordinate (6S)-5-formyl-5,6,7,8-tetrahydrofolate. A TrmE-type G domain is found at 214–375; the sequence is GMKVVIAGRP…LREHLKQAMG (162 aa). Asparagine 224 contributes to the K(+) binding site. Residues 224 to 229, 243 to 249, and 268 to 271 contribute to the GTP site; these read NAGKSS, TDIAGTT, and DTAG. Serine 228 contributes to the Mg(2+) binding site. Residues threonine 243, isoleucine 245, and threonine 248 each coordinate K(+). A Mg(2+)-binding site is contributed by threonine 249. Lysine 452 lines the (6S)-5-formyl-5,6,7,8-tetrahydrofolate pocket.

The protein belongs to the TRAFAC class TrmE-Era-EngA-EngB-Septin-like GTPase superfamily. TrmE GTPase family. In terms of assembly, homodimer. Heterotetramer of two MnmE and two MnmG subunits. Requires K(+) as cofactor.

It is found in the cytoplasm. Its function is as follows. Exhibits a very high intrinsic GTPase hydrolysis rate. Involved in the addition of a carboxymethylaminomethyl (cmnm) group at the wobble position (U34) of certain tRNAs, forming tRNA-cmnm(5)s(2)U34. The protein is tRNA modification GTPase MnmE of Haemophilus influenzae (strain ATCC 51907 / DSM 11121 / KW20 / Rd).